Here is a 523-residue protein sequence, read N- to C-terminus: Tryptophan 6-halogenase SttH (523 aa).

FAD-binding residues include glycine 14, serine 40, isoleucine 43, valine 46, valine 48, and alanine 51. Lysine 79 is a catalytic residue. Proline 97 is a binding site for L-tryptophan. Residues valine 203 and leucine 354 each contribute to the FAD site. Chloride-binding residues include threonine 365 and glycine 366. Isoleucine 367 is a binding site for FAD. Residues tyrosine 456 and tyrosine 457 each contribute to the L-tryptophan site.

It belongs to the flavin-dependent halogenase family. Bacterial tryptophan halogenase subfamily. In terms of assembly, homodimer.

It carries out the reaction L-tryptophan + FADH2 + chloride + O2 = 6-chloro-L-tryptophan + FAD + 2 H2O. The enzyme catalyses D-tryptophan + FADH2 + chloride + O2 = 6-chloro-D-tryptophan + FAD + 2 H2O. Catalyzes the chlorination of tryptophan (Trp) at C6 position to yield 6-chloro-tryptophan. Accepts both L and D-Trp as the substrates. The enzyme also uses bromide to yield 6-bromo-Trp. In vitro, can also catalyze the halogenation of 3-indolepropionic acid, N-methyltryptophan and non-indolic aromatic substrates such as kynurenine, anthranilamide and N-phenylanthranilic acid. This Streptomyces toxytricini (Actinomyces toxytricini) protein is Tryptophan 6-halogenase SttH.